The chain runs to 225 residues: Claudin-17 (225 aa).

Residues 1–7 (MAFYPLQ) lie on the Cytoplasmic side of the membrane. The chain crosses the membrane as a helical span at residues 8-28 (IAGLVLGFLGMVGTLATTLLP). Topologically, residues 29 to 81 (QWRVSAFIGSNIIVFERIWEGLWMNCVRQAKARLQCKFYSSMLALSPALEAAR) are extracellular. The chain crosses the membrane as a helical span at residues 82 to 102 (ALMCVAVALSLIALIIGICGM). Over 103–124 (KKIQCTGSNERAKAYLLGTSGV) the chain is Cytoplasmic. Residues 125–145 (LFILTGIFVLIPVCWTANIII) traverse the membrane as a helical segment. Topologically, residues 146-164 (RDFYNPAVHVGQKRELGAA) are extracellular. The helical transmembrane segment at 165-185 (LFLGWASVAVLFIAGGLLCGF) threads the bilayer. The Cytoplasmic portion of the chain corresponds to 186-225 (CCCNRKKQRDGYPAPRPSMPRTDERRRNMTRQSETPTSYV). Residues 194–225 (RDGYPAPRPSMPRTDERRRNMTRQSETPTSYV) are disordered. Residues 215-225 (TRQSETPTSYV) are compositionally biased toward polar residues.

This sequence belongs to the claudin family. Does not form homotypic polymeric strands and it is not sufficient to form tight junctions by its own. Interacts with OCLN.

It is found in the cell junction. The protein localises to the tight junction. The protein resides in the cell membrane. It carries out the reaction chloride(in) = chloride(out). It catalyses the reaction hydrogencarbonate(in) = hydrogencarbonate(out). The enzyme catalyses bromide(in) = bromide(out). The catalysed reaction is iodide(out) = iodide(in). It carries out the reaction fluoride(in) = fluoride(out). It catalyses the reaction nitrate(in) = nitrate(out). The enzyme catalyses thiocyanate(in) = thiocyanate(out). Channel-forming tight junction protein with selectivity for anions, including chloride and hydrogencarbonate, and for solutes smaller than 9 Angstrom in diameter. In the kidney proximal tubule, may be involved in quantitative reabsorption of filtered anions. Does not affect water permeability. This Sus scrofa (Pig) protein is Claudin-17 (CLDN17).